The primary structure comprises 230 residues: MPLHRTRIKLCGLTQPDDVDHAVALGADAIGLVFYPPSPRYVATGRAAELARRAGPFVTVTGLFVNASADDVARVLDQVPLTLLQFHGDETPEQCAEIAGKVGLPWLRALRVQPGTDLVEFADRFAAAQGLLLDAFVEGYGGGGHVFDWTLIPPQWLSQSAPPSAAPRLVLSGGLSAQNVAGAIERVRPYAVDVSSGIEAARGVKDRARMTAFVRAVREADAALGASVQA.

Belongs to the TrpF family.

It carries out the reaction N-(5-phospho-beta-D-ribosyl)anthranilate = 1-(2-carboxyphenylamino)-1-deoxy-D-ribulose 5-phosphate. The protein operates within amino-acid biosynthesis; L-tryptophan biosynthesis; L-tryptophan from chorismate: step 3/5. This chain is N-(5'-phosphoribosyl)anthranilate isomerase, found in Ralstonia nicotianae (strain ATCC BAA-1114 / GMI1000) (Ralstonia solanacearum).